The primary structure comprises 469 residues: SWI/SNF complex subunit SWI3B (469 aa).

The segment at 1 to 42 (MAMKAPDPGGSGEILPSTPSLSETTSGGAAAASKSAQLPSSS) is disordered. The segment covering 15–42 (LPSTPSLSETTSGGAAAASKSAQLPSSS) has biased composition (low complexity). The region spanning 48–145 (IHVPSYSSWF…YNSSASAKPL (98 aa)) is the SWIRM domain. Residues 223 to 274 (ESKPEWSDKEILLLLEAVMHYGDDWKKVASHVIGRTEKDCVSQFVKLPFGEQ) form the SANT domain. 2 stretches are compositionally biased toward basic and acidic residues: residues 293–306 (DSDI…DKDG) and 360–369 (DKNASRDPNR). Disordered stretches follow at residues 293–314 (DSDI…KRIK) and 360–387 (DKNA…ESER). The segment covering 370–380 (QDANAASSGET) has biased composition (polar residues). Residues 423 to 447 (VHFEKLDLEMERSRKQLEEVRNLLF) are a coiled coil.

Homodimers and heterodimers. Interacts with SWI3A, SWI3C, SWI3D, BSH, BRM and FCA (via C-terminus), and (via N-terminus) with HAB1. Interacts with MORC6 and SUVH9. In terms of tissue distribution, expressed in roots, stems, leaves, flowers and siliques.

It localises to the nucleus. Functionally, component of a multiprotein complex equivalent of the SWI/SNF complex, an ATP-dependent chromatin-remodeling complex, which is required for the positive and negative regulation of gene expression of a large number of genes. It changes chromatin structure by altering DNA-histone contacts within a nucleosome, leading eventually to a change in nucleosome position, thus facilitating or repressing binding of gene-specific transcription factors. May play an essential role in the transition from the vegetative to the reproductive phase of development. May be a positive regulator of ABA signaling. This is SWI/SNF complex subunit SWI3B (SWI3B) from Arabidopsis thaliana (Mouse-ear cress).